The chain runs to 183 residues: Shikimate kinase (183 aa).

19-24 (GAGKTT) contributes to the ATP binding site. A Mg(2+)-binding site is contributed by Thr-23. Positions 41, 65, and 87 each coordinate substrate. Residue Arg-124 coordinates ATP. Arg-143 contributes to the substrate binding site.

Belongs to the shikimate kinase family. Monomer. Requires Mg(2+) as cofactor.

Its subcellular location is the cytoplasm. The enzyme catalyses shikimate + ATP = 3-phosphoshikimate + ADP + H(+). Its pathway is metabolic intermediate biosynthesis; chorismate biosynthesis; chorismate from D-erythrose 4-phosphate and phosphoenolpyruvate: step 5/7. In terms of biological role, catalyzes the specific phosphorylation of the 3-hydroxyl group of shikimic acid using ATP as a cosubstrate. The polypeptide is Shikimate kinase (Thermosynechococcus vestitus (strain NIES-2133 / IAM M-273 / BP-1)).